Consider the following 388-residue polypeptide: Phosphopentomutase (388 aa).

Mn(2+)-binding residues include Asp-11, Asp-283, His-288, Asp-324, His-325, and His-336.

The protein belongs to the phosphopentomutase family. Mn(2+) serves as cofactor.

The protein localises to the cytoplasm. It carries out the reaction 2-deoxy-alpha-D-ribose 1-phosphate = 2-deoxy-D-ribose 5-phosphate. The enzyme catalyses alpha-D-ribose 1-phosphate = D-ribose 5-phosphate. Its pathway is carbohydrate degradation; 2-deoxy-D-ribose 1-phosphate degradation; D-glyceraldehyde 3-phosphate and acetaldehyde from 2-deoxy-alpha-D-ribose 1-phosphate: step 1/2. In terms of biological role, isomerase that catalyzes the conversion of deoxy-ribose 1-phosphate (dRib-1-P) and ribose 1-phosphate (Rib-1-P) to deoxy-ribose 5-phosphate (dRib-5-P) and ribose 5-phosphate (Rib-5-P), respectively. This Anaeromyxobacter dehalogenans (strain 2CP-1 / ATCC BAA-258) protein is Phosphopentomutase.